We begin with the raw amino-acid sequence, 671 residues long: DNA ligase (671 aa).

Residues 32–36 (DAEYD), 81–82 (SL), and Glu-113 contribute to the NAD(+) site. Lys-115 functions as the N6-AMP-lysine intermediate in the catalytic mechanism. NAD(+) contacts are provided by Arg-136, Glu-173, Lys-290, and Lys-314. Residues Cys-408, Cys-411, Cys-426, and Cys-432 each contribute to the Zn(2+) site. The 79-residue stretch at 593–671 (EIDSPFAGKT…EAEMLRLLGS (79 aa)) folds into the BRCT domain.

It belongs to the NAD-dependent DNA ligase family. LigA subfamily. Mg(2+) serves as cofactor. Mn(2+) is required as a cofactor.

The enzyme catalyses NAD(+) + (deoxyribonucleotide)n-3'-hydroxyl + 5'-phospho-(deoxyribonucleotide)m = (deoxyribonucleotide)n+m + AMP + beta-nicotinamide D-nucleotide.. Functionally, DNA ligase that catalyzes the formation of phosphodiester linkages between 5'-phosphoryl and 3'-hydroxyl groups in double-stranded DNA using NAD as a coenzyme and as the energy source for the reaction. It is essential for DNA replication and repair of damaged DNA. This Escherichia coli O157:H7 protein is DNA ligase.